The chain runs to 861 residues: DNA mismatch repair protein MutS (861 aa).

Residue 618-625 (GPNMGGKS) participates in ATP binding.

It belongs to the DNA mismatch repair MutS family.

Functionally, this protein is involved in the repair of mismatches in DNA. It is possible that it carries out the mismatch recognition step. This protein has a weak ATPase activity. This Shewanella sp. (strain MR-7) protein is DNA mismatch repair protein MutS.